The primary structure comprises 408 residues: Probable 2,3-bisphosphoglycerate-independent phosphoglycerate mutase (408 aa).

Belongs to the BPG-independent phosphoglycerate mutase family. A-PGAM subfamily.

It catalyses the reaction (2R)-2-phosphoglycerate = (2R)-3-phosphoglycerate. It functions in the pathway carbohydrate degradation; glycolysis; pyruvate from D-glyceraldehyde 3-phosphate: step 3/5. Functionally, catalyzes the interconversion of 2-phosphoglycerate and 3-phosphoglycerate. The protein is Probable 2,3-bisphosphoglycerate-independent phosphoglycerate mutase of Deinococcus geothermalis (strain DSM 11300 / CIP 105573 / AG-3a).